The sequence spans 335 residues: Flagellar P-ring protein (335 aa).

The N-terminal stretch at 1 to 24 (MNKITNFLILSAVLFFSLIESANA) is a signal peptide.

This sequence belongs to the FlgI family. As to quaternary structure, the basal body constitutes a major portion of the flagellar organelle and consists of four rings (L,P,S, and M) mounted on a central rod.

Its subcellular location is the periplasm. It localises to the bacterial flagellum basal body. In terms of biological role, assembles around the rod to form the L-ring and probably protects the motor/basal body from shearing forces during rotation. In Bdellovibrio bacteriovorus (strain ATCC 15356 / DSM 50701 / NCIMB 9529 / HD100), this protein is Flagellar P-ring protein.